The sequence spans 138 residues: Putative pre-16S rRNA nuclease (138 aa).

This sequence belongs to the YqgF nuclease family.

It localises to the cytoplasm. Functionally, could be a nuclease involved in processing of the 5'-end of pre-16S rRNA. This chain is Putative pre-16S rRNA nuclease, found in Polaromonas sp. (strain JS666 / ATCC BAA-500).